The primary structure comprises 462 residues: MFILSSSSSTLPSAPPFSSTTSIFLSFSRVSLPPSSSSLKLLPLSLQFGPPKLASSCSLRFSASRAMAELIQDKESAQSAATAAAASSGYERRNEPAHSRKFLDVRSEEELLSCIKKETEAGKLPPNVAAGMEELYQNYRNAVIESGNPKADEIVLSNMTVALDRILLDVEDPFVFSSHHKAIREPFDYYIFGQNYIRPLIDFGNSFVGNLSLFKDIEEKLQQGHNVVLISNHQTEADPAIISLLLEKTNPYIAENTIFVAGDRVLADPLCKPFSIGRNLICVYSKKHMFDIPELTETKRKANTRSLKEMALLLRGGSQLIWIAPSGGRDRPDPSTGEWYPAPFDASSVDNMRRLIQHSDVPGHLFPLALLCHDIMPPPSQVEIEIGEKRVIAFNGAGLSVAPEISFEEIAATHKNPEEVREAYSKALFDSVAMQYNVLKTAISGKQGLGASTADVSLSQPW.

A chloroplast-targeting transit peptide spans 1-82 (MFILSSSSST…DKESAQSAAT (82 aa)). The HXXXXD motif signature appears at 233 to 238 (HQTEAD).

The protein belongs to the GPAT/DAPAT family.

The protein resides in the plastid. Its subcellular location is the chloroplast stroma. It catalyses the reaction a fatty acyl-[ACP] + sn-glycerol 3-phosphate = a 1-acyl-sn-glycero-3-phosphate + holo-[ACP]. The catalysed reaction is sn-glycerol 3-phosphate + an acyl-CoA = a 1-acyl-sn-glycero-3-phosphate + CoA. It functions in the pathway phospholipid metabolism; CDP-diacylglycerol biosynthesis; CDP-diacylglycerol from sn-glycerol 3-phosphate: step 1/3. Functionally, esterifies the acyl-group from acyl-acyl carrier proteins (acyl-ACPs) to the sn-1 position of glycerol-3-phosphate. The physiological acyl donors in chloroplasts are acyl-ACPs, but acyl-CoAs are used as artificial donor for in vitro reactions. The enzyme from chilling-resistant plants discriminates against non-fluid palmitic acid and selects oleic acid whereas the enzyme from sensitive plants accepts both fatty acids. Squash is chilling-sensitive. Does not seem to discriminate between the acyl-ACP thioesters 18:1-ACP, 18:0-ACP and 16:0-ACP. Exhibits higher selectivity for 16:0-CoA than 18:1-CoA in vitro. The polypeptide is Glycerol-3-phosphate acyltransferase ATS12, chloroplastic (Cucurbita moschata (Winter crookneck squash)).